The sequence spans 273 residues: Dermonecrotic toxin LspaSicTox-alphaIA2iii (273 aa).

Histidine 5 is a catalytic residue. 2 residues coordinate Mg(2+): glutamate 25 and aspartate 27. Histidine 41 serves as the catalytic Nucleophile. 2 cysteine pairs are disulfide-bonded: cysteine 45/cysteine 51 and cysteine 47/cysteine 190. Aspartate 85 lines the Mg(2+) pocket.

The protein belongs to the arthropod phospholipase D family. Class II subfamily. Mg(2+) is required as a cofactor. In terms of tissue distribution, expressed by the venom gland.

It is found in the secreted. The catalysed reaction is an N-(acyl)-sphingosylphosphocholine = an N-(acyl)-sphingosyl-1,3-cyclic phosphate + choline. It catalyses the reaction an N-(acyl)-sphingosylphosphoethanolamine = an N-(acyl)-sphingosyl-1,3-cyclic phosphate + ethanolamine. The enzyme catalyses a 1-acyl-sn-glycero-3-phosphocholine = a 1-acyl-sn-glycero-2,3-cyclic phosphate + choline. It carries out the reaction a 1-acyl-sn-glycero-3-phosphoethanolamine = a 1-acyl-sn-glycero-2,3-cyclic phosphate + ethanolamine. In terms of biological role, dermonecrotic toxins cleave the phosphodiester linkage between the phosphate and headgroup of certain phospholipids (sphingolipid and lysolipid substrates), forming an alcohol (often choline) and a cyclic phosphate. This toxin acts on sphingomyelin (SM). It may also act on ceramide phosphoethanolamine (CPE), lysophosphatidylcholine (LPC) and lysophosphatidylethanolamine (LPE), but not on lysophosphatidylserine (LPS), and lysophosphatidylglycerol (LPG). It acts by transphosphatidylation, releasing exclusively cyclic phosphate products as second products. Induces dermonecrosis, hemolysis, increased vascular permeability, edema, inflammatory response, and platelet aggregation. This is Dermonecrotic toxin LspaSicTox-alphaIA2iii from Loxosceles spadicea (Recluse spider).